A 170-amino-acid chain; its full sequence is Small ribosomal subunit protein uS5 (170 aa).

The 64-residue stretch at 13 to 76 (LTEKLIGVNR…DQARRSMVKI (64 aa)) folds into the S5 DRBM domain.

It belongs to the universal ribosomal protein uS5 family. In terms of assembly, part of the 30S ribosomal subunit. Contacts proteins S4 and S8.

With S4 and S12 plays an important role in translational accuracy. Functionally, located at the back of the 30S subunit body where it stabilizes the conformation of the head with respect to the body. The chain is Small ribosomal subunit protein uS5 from Laribacter hongkongensis (strain HLHK9).